A 394-amino-acid chain; its full sequence is MTPRVLGLMSGTSADGIDAALLELPGWPPTGSGGIFPALSGGVPRGRVAEHVFTPFPPELREAVLAAMQSGLDAADLTQLHWWLGEALAEAAAPLAPHADLIASHGQTVQHHPRPDPRRGWTRPATLQLGEVALIAERTGKPVVADFRPADMAAGGLGAPLVPFADWALFAEGGVRRAIHNLGGISNLTFLPGLDRDEVQAFDTGPGNCLLDEVAALAGQACDEGGRLAAAGQVHTETLAAWLAHPELQVPPPKATGREVWTLARLPRPADLGLPDLAATATAFTARTVADAYARWVVPQGLDEVVVAGGGARNPALLAAIRSALSPLPLRTFTEVGWAAQGLTDATREAAAFAFLGYARAQGWANTLPRTTGARHAVSAGKWLLPPSLPETLA.

An ATP-binding site is contributed by 11–18 (GTSADGID).

The protein belongs to the anhydro-N-acetylmuramic acid kinase family.

It carries out the reaction 1,6-anhydro-N-acetyl-beta-muramate + ATP + H2O = N-acetyl-D-muramate 6-phosphate + ADP + H(+). The protein operates within amino-sugar metabolism; 1,6-anhydro-N-acetylmuramate degradation. It functions in the pathway cell wall biogenesis; peptidoglycan recycling. Functionally, catalyzes the specific phosphorylation of 1,6-anhydro-N-acetylmuramic acid (anhMurNAc) with the simultaneous cleavage of the 1,6-anhydro ring, generating MurNAc-6-P. Is required for the utilization of anhMurNAc either imported from the medium or derived from its own cell wall murein, and thus plays a role in cell wall recycling. This Deinococcus geothermalis (strain DSM 11300 / CIP 105573 / AG-3a) protein is Anhydro-N-acetylmuramic acid kinase.